The primary structure comprises 311 residues: Probable manganese-dependent inorganic pyrophosphatase (311 aa).

Mn(2+)-binding residues include histidine 9, aspartate 13, aspartate 15, aspartate 75, histidine 97, and aspartate 149.

Belongs to the PPase class C family. It depends on Mn(2+) as a cofactor.

It localises to the cytoplasm. The catalysed reaction is diphosphate + H2O = 2 phosphate + H(+). In Lactobacillus acidophilus (strain ATCC 700396 / NCK56 / N2 / NCFM), this protein is Probable manganese-dependent inorganic pyrophosphatase.